A 268-amino-acid chain; its full sequence is Tryptophan synthase alpha chain (268 aa).

Catalysis depends on proton acceptor residues Glu49 and Asp60.

This sequence belongs to the TrpA family. In terms of assembly, tetramer of two alpha and two beta chains.

It catalyses the reaction (1S,2R)-1-C-(indol-3-yl)glycerol 3-phosphate + L-serine = D-glyceraldehyde 3-phosphate + L-tryptophan + H2O. It participates in amino-acid biosynthesis; L-tryptophan biosynthesis; L-tryptophan from chorismate: step 5/5. In terms of biological role, the alpha subunit is responsible for the aldol cleavage of indoleglycerol phosphate to indole and glyceraldehyde 3-phosphate. This chain is Tryptophan synthase alpha chain, found in Escherichia coli O157:H7.